The sequence spans 380 residues: Succinyl-diaminopimelate desuccinylase (380 aa).

Zn(2+) is bound at residue H69. Residue D71 is part of the active site. D102 is a binding site for Zn(2+). E135 serves as the catalytic Proton acceptor. Zn(2+) is bound by residues E136, E164, and H353.

Belongs to the peptidase M20A family. DapE subfamily. In terms of assembly, homodimer. Zn(2+) is required as a cofactor. Requires Co(2+) as cofactor.

The enzyme catalyses N-succinyl-(2S,6S)-2,6-diaminopimelate + H2O = (2S,6S)-2,6-diaminopimelate + succinate. It participates in amino-acid biosynthesis; L-lysine biosynthesis via DAP pathway; LL-2,6-diaminopimelate from (S)-tetrahydrodipicolinate (succinylase route): step 3/3. Functionally, catalyzes the hydrolysis of N-succinyl-L,L-diaminopimelic acid (SDAP), forming succinate and LL-2,6-diaminopimelate (DAP), an intermediate involved in the bacterial biosynthesis of lysine and meso-diaminopimelic acid, an essential component of bacterial cell walls. The polypeptide is Succinyl-diaminopimelate desuccinylase (Cereibacter sphaeroides (strain ATCC 17025 / ATH 2.4.3) (Rhodobacter sphaeroides)).